We begin with the raw amino-acid sequence, 193 residues long: Large ribosomal subunit protein uL18 (193 aa).

The protein belongs to the universal ribosomal protein uL18 family. In terms of assembly, part of the 50S ribosomal subunit. Contacts the 5S and 23S rRNAs.

Functionally, this is one of the proteins that bind and probably mediate the attachment of the 5S RNA into the large ribosomal subunit, where it forms part of the central protuberance. This Methanosphaera stadtmanae (strain ATCC 43021 / DSM 3091 / JCM 11832 / MCB-3) protein is Large ribosomal subunit protein uL18.